The primary structure comprises 501 residues: Sodium-coupled neutral amino acid symporter 2 (501 aa).

Positions Met-1–Asp-26 are disordered. The Cytoplasmic portion of the chain corresponds to Met-1 to Ser-77. Positions Met-1–Met-97 are regulates protein turnover upon amino acid deprivation. The helical transmembrane segment at Val-78–Met-97 threads the bilayer. Asn-83 is a Na(+) binding site. At Ala-98–Ala-103 the chain is on the extracellular side. A helical transmembrane segment spans residues Leu-104 to Leu-124. Over Lys-125–Asn-159 the chain is Cytoplasmic. Residues Ile-160–Ile-178 traverse the membrane as a helical segment. At Lys-179 to Gly-189 the chain is on the extracellular side. A helical transmembrane segment spans residues His-190–Leu-210. The Cytoplasmic portion of the chain corresponds to Ser-211 to Tyr-218. Residues Leu-219–Trp-239 form a helical membrane-spanning segment. Over Lys-240–Thr-287 the chain is Extracellular. Cys-246 and Cys-276 are oxidised to a cystine. 2 N-linked (GlcNAc...) asparagine glycosylation sites follow: Asn-254 and Asn-259. A helical transmembrane segment spans residues Val-288 to Tyr-308. Topologically, residues Glu-309 to Tyr-324 are cytoplasmic. The helical transmembrane segment at Val-325–Phe-345 threads the bilayer. The Extracellular portion of the chain corresponds to Tyr-346–Leu-366. Residues Leu-367 to Phe-387 traverse the membrane as a helical segment. Residue Thr-381 coordinates Na(+). Topologically, residues Pro-388 to His-408 are cytoplasmic. The chain crosses the membrane as a helical span at residues Cys-409–Ile-429. At Arg-430–Asp-431 the chain is on the extracellular side. The chain crosses the membrane as a helical span at residues Ile-432–Phe-452. Residues Tyr-453–Lys-467 lie on the Cytoplasmic side of the membrane. A helical membrane pass occupies residues Ile-468 to Leu-490. Over Asp-491 to His-501 the chain is Extracellular.

Belongs to the amino acid/polyamine transporter 2 family.

Its subcellular location is the cell membrane. The catalysed reaction is L-alanine(in) + Na(+)(in) = L-alanine(out) + Na(+)(out). It carries out the reaction glycine(in) + Na(+)(in) = glycine(out) + Na(+)(out). The enzyme catalyses L-serine(in) + Na(+)(in) = L-serine(out) + Na(+)(out). It catalyses the reaction L-proline(in) + Na(+)(in) = L-proline(out) + Na(+)(out). The catalysed reaction is L-methionine(in) + Na(+)(in) = L-methionine(out) + Na(+)(out). It carries out the reaction L-histidine(in) + Na(+)(in) = L-histidine(out) + Na(+)(out). The enzyme catalyses L-asparagine(in) + Na(+)(in) = L-asparagine(out) + Na(+)(out). It catalyses the reaction L-glutamine(in) + Na(+)(in) = L-glutamine(out) + Na(+)(out). The catalysed reaction is L-threonine(in) + Na(+)(in) = L-threonine(out) + Na(+)(out). It carries out the reaction L-leucine(in) + Na(+)(in) = L-leucine(out) + Na(+)(out). The enzyme catalyses L-phenylalanine(in) + Na(+)(in) = L-phenylalanine(out) + Na(+)(out). Its activity is regulated as follows. Inhibited by N-methyl-D-glucamine. Inhibited by choline. Allosteric regulation of sodium ions binding by pH. Symporter that cotransports neutral amino acids and sodium ions from the extracellular to the intracellular side of the cell membrane. The transport is pH-sensitive, Li(+)-intolerant, electrogenic, driven by the Na(+) electrochemical gradient and cotransports of neutral amino acids and sodium ions with a stoichiometry of 1:1. The protein is Sodium-coupled neutral amino acid symporter 2 of Gallus gallus (Chicken).